The primary structure comprises 257 residues: Hydroxyacylglutathione hydrolase (257 aa).

Residues histidine 54, histidine 56, aspartate 58, histidine 59, histidine 113, aspartate 137, and histidine 175 each contribute to the Zn(2+) site.

Belongs to the metallo-beta-lactamase superfamily. Glyoxalase II family. In terms of assembly, monomer. It depends on Zn(2+) as a cofactor.

The catalysed reaction is an S-(2-hydroxyacyl)glutathione + H2O = a 2-hydroxy carboxylate + glutathione + H(+). Its pathway is secondary metabolite metabolism; methylglyoxal degradation; (R)-lactate from methylglyoxal: step 2/2. Thiolesterase that catalyzes the hydrolysis of S-D-lactoyl-glutathione to form glutathione and D-lactic acid. In Trichodesmium erythraeum (strain IMS101), this protein is Hydroxyacylglutathione hydrolase.